A 291-amino-acid polypeptide reads, in one-letter code: MAVVTMKNLLESGVHFGHQVKRWDPRMKKYIFSERNGIHIIDLQKTIVAIREAYEAVRKTTSEGKSVLFVGTKKQAQQTIQKEAERCGMFYINNRWLGGMLTNFSTIKKSLARLKKIEKMEVDGTFDNLTKKEIASLQKEKSKLEKNLGGIKEMKDLPGILFIIDTRKEEIAIREARSLGIPIIAVVDTNCNPEGIDYPIPGNDDAIRAISLFTGVIANAVIEADNEHGLKIIENLQEDEESGDSGVDPYQDREEEITDYSNYTPKDEASGDDEDEEDNSLVNDEDLYDDK.

Positions 235-291 are disordered; sequence NLQEDEESGDSGVDPYQDREEEITDYSNYTPKDEASGDDEDEEDNSLVNDEDLYDDK. Positions 270 to 291 are enriched in acidic residues; the sequence is SGDDEDEEDNSLVNDEDLYDDK.

It belongs to the universal ribosomal protein uS2 family.

The polypeptide is Small ribosomal subunit protein uS2 (Treponema denticola (strain ATCC 35405 / DSM 14222 / CIP 103919 / JCM 8153 / KCTC 15104)).